We begin with the raw amino-acid sequence, 433 residues long: Serine/threonine-protein kinase Sgk1 (433 aa).

Residues 66 to 92 form a disordered region; it reads QDVELMNSNPSPPPSPSQQINLGPSSN. Residues 83–92 show a composition bias toward polar residues; the sequence is QQINLGPSSN. Residues 100–357 form the Protein kinase domain; that stretch reads FDFLKVIGKG…FTEIKNHMFF (258 aa). ATP is bound by residues 106–114 and K129; that span reads IGKGSFGKV. The Proton acceptor role is filled by D224. The AGC-kinase C-terminal domain occupies 358-433; sequence SPINWDDLNA…SYAPAMDSYL (76 aa).

This sequence belongs to the protein kinase superfamily. AGC Ser/Thr protein kinase family.

Its subcellular location is the cytoplasm. The protein localises to the nucleus. It is found in the endoplasmic reticulum. It catalyses the reaction L-seryl-[protein] + ATP = O-phospho-L-seryl-[protein] + ADP + H(+). It carries out the reaction L-threonyl-[protein] + ATP = O-phospho-L-threonyl-[protein] + ADP + H(+). In terms of biological role, protein kinase that may play an important role in cellular stress response. May be involved in the regulation of processes such as cell survival, neuronal excitability and renal sodium excretion. In Danio rerio (Zebrafish), this protein is Serine/threonine-protein kinase Sgk1 (sgk1).